The following is a 272-amino-acid chain: Cell division protein FtsQ (272 aa).

Residues 1–43 (MEYNPPNTRERIVARRQRMRRNSTEPVVPGWRWRLREGLRSGR) are Cytoplasmic-facing. Residues 44–64 (IVSGIVFVISCFALFYVLFSS) form a helical membrane-spanning segment. Residues 65 to 272 (RFRVQTVEVV…FYQYRPDGSS (208 aa)) are Extracellular-facing. The POTRA domain occupies 66–133 (FRVQTVEVVG…DRARIVIVER (68 aa)).

This sequence belongs to the FtsQ/DivIB family. FtsQ subfamily.

The protein localises to the cell membrane. In terms of biological role, essential cell division protein. This is Cell division protein FtsQ from Chloroflexus aurantiacus (strain ATCC 29366 / DSM 635 / J-10-fl).